We begin with the raw amino-acid sequence, 210 residues long: Imidazole glycerol phosphate synthase subunit HisH (210 aa).

Positions 7 to 210 (KVVIIDTGCA…SQLIKNFLEM (204 aa)) constitute a Glutamine amidotransferase type-1 domain. Cys-82 serves as the catalytic Nucleophile. Catalysis depends on residues His-192 and Glu-194.

Heterodimer of HisH and HisF.

It localises to the cytoplasm. The catalysed reaction is 5-[(5-phospho-1-deoxy-D-ribulos-1-ylimino)methylamino]-1-(5-phospho-beta-D-ribosyl)imidazole-4-carboxamide + L-glutamine = D-erythro-1-(imidazol-4-yl)glycerol 3-phosphate + 5-amino-1-(5-phospho-beta-D-ribosyl)imidazole-4-carboxamide + L-glutamate + H(+). It carries out the reaction L-glutamine + H2O = L-glutamate + NH4(+). It functions in the pathway amino-acid biosynthesis; L-histidine biosynthesis; L-histidine from 5-phospho-alpha-D-ribose 1-diphosphate: step 5/9. Its function is as follows. IGPS catalyzes the conversion of PRFAR and glutamine to IGP, AICAR and glutamate. The HisH subunit catalyzes the hydrolysis of glutamine to glutamate and ammonia as part of the synthesis of IGP and AICAR. The resulting ammonia molecule is channeled to the active site of HisF. This is Imidazole glycerol phosphate synthase subunit HisH from Photobacterium profundum (strain SS9).